Consider the following 683-residue polypeptide: DNA ligase (683 aa).

Residues 36–40 (DAVYD), 85–86 (SL), and E121 each bind NAD(+). The N6-AMP-lysine intermediate role is filled by K123. 4 residues coordinate NAD(+): R144, E180, K296, and K320. Zn(2+)-binding residues include C413, C416, C431, and C437. A BRCT domain is found at 605–683 (PSEGHLSGKV…ESGWRVLAGL (79 aa)).

This sequence belongs to the NAD-dependent DNA ligase family. LigA subfamily. Mg(2+) serves as cofactor. Requires Mn(2+) as cofactor.

It catalyses the reaction NAD(+) + (deoxyribonucleotide)n-3'-hydroxyl + 5'-phospho-(deoxyribonucleotide)m = (deoxyribonucleotide)n+m + AMP + beta-nicotinamide D-nucleotide.. Functionally, DNA ligase that catalyzes the formation of phosphodiester linkages between 5'-phosphoryl and 3'-hydroxyl groups in double-stranded DNA using NAD as a coenzyme and as the energy source for the reaction. It is essential for DNA replication and repair of damaged DNA. The polypeptide is DNA ligase (Gluconobacter oxydans (strain 621H) (Gluconobacter suboxydans)).